A 194-amino-acid polypeptide reads, in one-letter code: dCTP deaminase (194 aa).

DCTP contacts are provided by residues 110–115, Asp128, 136–138, Tyr171, Lys178, and Gln182; these read RSSLAR and VLE. The active-site Proton donor/acceptor is the Glu138. Residues 174–194 are disordered; the sequence is RKSSKYKDQQEAVASRISQDK.

The protein belongs to the dCTP deaminase family. As to quaternary structure, homotrimer.

It carries out the reaction dCTP + H2O + H(+) = dUTP + NH4(+). It participates in pyrimidine metabolism; dUMP biosynthesis; dUMP from dCTP (dUTP route): step 1/2. Functionally, catalyzes the deamination of dCTP to dUTP. The sequence is that of dCTP deaminase from Shewanella frigidimarina (strain NCIMB 400).